A 164-amino-acid polypeptide reads, in one-letter code: Phosphopantetheine adenylyltransferase (164 aa).

Thr-9 contributes to the substrate binding site. ATP-binding positions include 9 to 10 (TF) and His-17. Lys-41, Leu-78, and Arg-92 together coordinate substrate. Residues 93 to 95 (GLR), Glu-103, and 128 to 134 (RQAIASK) each bind ATP.

Belongs to the bacterial CoaD family. In terms of assembly, homohexamer. Mg(2+) serves as cofactor.

The protein localises to the cytoplasm. It catalyses the reaction (R)-4'-phosphopantetheine + ATP + H(+) = 3'-dephospho-CoA + diphosphate. The protein operates within cofactor biosynthesis; coenzyme A biosynthesis; CoA from (R)-pantothenate: step 4/5. Functionally, reversibly transfers an adenylyl group from ATP to 4'-phosphopantetheine, yielding dephospho-CoA (dPCoA) and pyrophosphate. The protein is Phosphopantetheine adenylyltransferase of Paracoccus denitrificans (strain Pd 1222).